Consider the following 118-residue polypeptide: uncharacterized protein (118 aa).

This is an uncharacterized protein from Haemophilus influenzae (strain ATCC 51907 / DSM 11121 / KW20 / Rd).